The primary structure comprises 92 residues: Cell division protein FtsB (92 aa).

The Cytoplasmic segment spans residues 1–3 (MRF). A helical transmembrane segment spans residues 4–21 (FQVGLLCLALFVQYRLWF). Residues 22–92 (GHNGVQDYTR…TFIRVLPAQQ (71 aa)) lie on the Periplasmic side of the membrane. A coiled-coil region spans residues 40-73 (LQTNEKLIKRNKVLTADIEDLKLGHEGIEERARN).

Belongs to the FtsB family. Part of a complex composed of FtsB, FtsL and FtsQ.

The protein resides in the cell inner membrane. In terms of biological role, essential cell division protein. May link together the upstream cell division proteins, which are predominantly cytoplasmic, with the downstream cell division proteins, which are predominantly periplasmic. In Pseudoalteromonas translucida (strain TAC 125), this protein is Cell division protein FtsB.